The primary structure comprises 390 residues: Chorismate synthase (390 aa).

NADP(+)-binding residues include R39 and R45. FMN is bound by residues 132–134 (RSS), 253–254 (NA), G298, 313–317 (KPIPT), and R339.

Belongs to the chorismate synthase family. As to quaternary structure, homotetramer. It depends on FMNH2 as a cofactor.

The enzyme catalyses 5-O-(1-carboxyvinyl)-3-phosphoshikimate = chorismate + phosphate. Its pathway is metabolic intermediate biosynthesis; chorismate biosynthesis; chorismate from D-erythrose 4-phosphate and phosphoenolpyruvate: step 7/7. Its function is as follows. Catalyzes the anti-1,4-elimination of the C-3 phosphate and the C-6 proR hydrogen from 5-enolpyruvylshikimate-3-phosphate (EPSP) to yield chorismate, which is the branch point compound that serves as the starting substrate for the three terminal pathways of aromatic amino acid biosynthesis. This reaction introduces a second double bond into the aromatic ring system. This is Chorismate synthase from Bacillus cytotoxicus (strain DSM 22905 / CIP 110041 / 391-98 / NVH 391-98).